A 164-amino-acid chain; its full sequence is Dehydrin Rab16C (164 aa).

The span at 42–51 (MGGHHAGAGG) shows a compositional bias: gly residues. The interval 42–164 (MGGHHAGAGG…KIKEKLPGQH (123 aa)) is disordered. Over residues 105–115 (GNNQQQQQMMG) the composition is skewed to low complexity. A compositionally biased stretch (gly residues) spans 128–138 (GMTGAGTGTGV). Residues 147 to 164 (GEKKGFMDKIKEKLPGQH) are compositionally biased toward basic and acidic residues.

This sequence belongs to the plant dehydrin family.

In Oryza sativa subsp. japonica (Rice), this protein is Dehydrin Rab16C (RAB16C).